The sequence spans 135 residues: MSADYYEHLYCVFCYCVLGKVEARRCYDKKIRTVVRGGLRCAVCTACLEKGLYLERVLNAPQPVYQGSIEEPDPFIQKACIRCMYCGGILTRDEKDRHRYFEELYVIFRNQVLGRCYTCTRHGMCSAPYRANATG.

Zinc fingers lie at residues 11-47 (CVFC…CTAC) and 83-119 (CMYC…CYTC).

The protein belongs to the papillomaviridae E6 protein family. As to quaternary structure, forms homodimers. Interacts with ubiquitin-protein ligase UBE3A/E6-AP; this interaction stimulates UBE3A ubiquitin activity. Interacts with host BAK1.

The protein resides in the host cytoplasm. Its subcellular location is the host nucleus. Its function is as follows. Plays a major role in the induction and maintenance of cellular transformation. E6 associates with host UBE3A/E6-AP ubiquitin-protein ligase and modulates its activity. Protects host keratinocytes from apoptosis by mediating the degradation of host BAK1. May also inhibit host immune response. This Odocoileus virginianus papillomavirus 1 (DPV) protein is Protein E6.